We begin with the raw amino-acid sequence, 231 residues long: Response regulator MprA (231 aa).

A Response regulatory domain is found at 4–118 (RILVVDDDRA…ELLARMRALL (115 aa)). Asp48 is modified (4-aspartylphosphate). The segment at residues 130 to 228 (SAAMTFSDLS…VRGVGYVLRE (99 aa)) is a DNA-binding region (ompR/PhoB-type).

In terms of processing, phosphorylated and dephosphorylated by MprB.

Its subcellular location is the cytoplasm. In terms of biological role, member of the two-component regulatory system MprB/MprA which contributes to maintaining a balance among several systems involved in stress resistance and is required for establishment and maintenance of persistent infection in the host. Functions as a transcriptional regulator that recognizes a 19-bp nucleotide motif comprizing two loosely conserved 8-bp direct DNA-binding motif repeats separated by a 3-bp spacer region. This is Response regulator MprA (mprA) from Mycolicibacterium vanbaalenii (strain DSM 7251 / JCM 13017 / BCRC 16820 / KCTC 9966 / NRRL B-24157 / PYR-1) (Mycobacterium vanbaalenii).